The sequence spans 268 residues: Shikimate dehydrogenase (NADP(+)) (268 aa).

Shikimate-binding positions include 13-15 (SLS) and Thr60. The active-site Proton acceptor is Lys64. Glu76 provides a ligand contact to NADP(+). Residues Asn85 and Asp100 each coordinate shikimate. NADP(+) is bound by residues 124-128 (GAGGA), 148-153 (NRTMAR), and Ile209. A shikimate-binding site is contributed by Tyr211. Gly232 provides a ligand contact to NADP(+).

The protein belongs to the shikimate dehydrogenase family. As to quaternary structure, homodimer.

It catalyses the reaction shikimate + NADP(+) = 3-dehydroshikimate + NADPH + H(+). Its pathway is metabolic intermediate biosynthesis; chorismate biosynthesis; chorismate from D-erythrose 4-phosphate and phosphoenolpyruvate: step 4/7. In terms of biological role, involved in the biosynthesis of the chorismate, which leads to the biosynthesis of aromatic amino acids. Catalyzes the reversible NADPH linked reduction of 3-dehydroshikimate (DHSA) to yield shikimate (SA). This Staphylococcus aureus (strain bovine RF122 / ET3-1) protein is Shikimate dehydrogenase (NADP(+)).